The following is a 356-amino-acid chain: Protein RecA (356 aa).

79–86 provides a ligand contact to ATP; sequence GPESSGKT.

The protein belongs to the RecA family.

The protein localises to the cytoplasm. Can catalyze the hydrolysis of ATP in the presence of single-stranded DNA, the ATP-dependent uptake of single-stranded DNA by duplex DNA, and the ATP-dependent hybridization of homologous single-stranded DNAs. It interacts with LexA causing its activation and leading to its autocatalytic cleavage. This Borrelia hermsii (strain HS1 / DAH) protein is Protein RecA.